A 190-amino-acid chain; its full sequence is Prostaglandin-H2 D-isomerase (190 aa).

The N-terminal stretch at 1–22 (MATHHTLWMGLALLGVLGDLQA) is a signal peptide. Ser29 is a glycosylation site (O-linked (GalNAc...) serine). N-linked (GlcNAc...) (complex) asparagine glycosylation occurs at Asn51. Cys65 functions as the Nucleophile in the catalytic mechanism. The N-linked (GlcNAc...) (complex) asparagine glycan is linked to Asn78. A disulfide bridge connects residues Cys89 and Cys186.

It belongs to the calycin superfamily. Lipocalin family. Monomer. Post-translationally, N- and O-glycosylated. Both N-glycosylation recognition sites are almost quantitatively occupied by N-glycans of the biantennary complex type, with a considerable proportion of structures bearing a bisecting GlcNAc. N-glycan at Asn-78: dHex1Hex5HexNAc4. Agalacto structure as well as sialylated and nonsialylated oligosaccharides bearing alpha2-3- and/or alpha2-6-linked NeuNAc are present. Abundant in the brain and CNS, where it is expressed in tissues of the blood-brain barrier and secreted into the cerebro-spinal fluid. Abundantly expressed in the heart. In the male reproductive system, it is expressed in the testis, epididymis and prostate, and is secreted into the seminal fluid. Expressed in the eye and secreted into the aqueous humor. Lower levels detected in various tissue fluids such as serum, normal urine, ascitic fluid and tear fluid. Also found in a number of other organs including ovary, fimbriae of the fallopian tubes, kidney, leukocytes.

It is found in the rough endoplasmic reticulum. The protein resides in the nucleus membrane. It localises to the golgi apparatus. Its subcellular location is the cytoplasm. The protein localises to the perinuclear region. It is found in the secreted. The enzyme catalyses prostaglandin H2 = prostaglandin D2. In terms of biological role, catalyzes the conversion of PGH2 to PGD2, a prostaglandin involved in smooth muscle contraction/relaxation and a potent inhibitor of platelet aggregation. Involved in a variety of CNS functions, such as sedation, NREM sleep and PGE2-induced allodynia, and may have an anti-apoptotic role in oligodendrocytes. Binds small non-substrate lipophilic molecules, including biliverdin, bilirubin, retinal, retinoic acid and thyroid hormone, and may act as a scavenger for harmful hydrophobic molecules and as a secretory retinoid and thyroid hormone transporter. Possibly involved in development and maintenance of the blood-brain, blood-retina, blood-aqueous humor and blood-testis barrier. It is likely to play important roles in both maturation and maintenance of the central nervous system and male reproductive system. Involved in PLA2G3-dependent maturation of mast cells. PLA2G3 is secreted by immature mast cells and acts on nearby fibroblasts upstream to PTDGS to synthesize PGD2, which in turn promotes mast cell maturation and degranulation via PTGDR. This Homo sapiens (Human) protein is Prostaglandin-H2 D-isomerase (PTGDS).